The chain runs to 231 residues: 7-cyano-7-deazaguanine synthase (231 aa).

Residue 8–18 (FSGGQDSTTCL) coordinates ATP. Residues Cys188, Cys197, Cys200, and Cys203 each contribute to the Zn(2+) site.

The protein belongs to the QueC family. It depends on Zn(2+) as a cofactor.

The catalysed reaction is 7-carboxy-7-deazaguanine + NH4(+) + ATP = 7-cyano-7-deazaguanine + ADP + phosphate + H2O + H(+). It functions in the pathway purine metabolism; 7-cyano-7-deazaguanine biosynthesis. Functionally, catalyzes the ATP-dependent conversion of 7-carboxy-7-deazaguanine (CDG) to 7-cyano-7-deazaguanine (preQ(0)). The chain is 7-cyano-7-deazaguanine synthase from Erwinia tasmaniensis (strain DSM 17950 / CFBP 7177 / CIP 109463 / NCPPB 4357 / Et1/99).